The following is a 549-amino-acid chain: Cytoplasmic trehalase (549 aa).

Substrate contacts are provided by residues Arg-168, 175-176, Asn-212, 221-223, 292-294, and Gly-324; these read WD, RSQ, and RDE. Active-site proton donor/acceptor residues include Asp-326 and Glu-509. Position 525 (Glu-525) interacts with substrate.

The protein belongs to the glycosyl hydrolase 37 family. As to quaternary structure, monomer.

The protein localises to the cytoplasm. It catalyses the reaction alpha,alpha-trehalose + H2O = alpha-D-glucose + beta-D-glucose. It participates in glycan degradation; trehalose degradation; D-glucose from alpha,alpha-trehalose: step 1/1. Hydrolyzes trehalose to glucose. Could be involved, in cells returning to low osmolarity conditions, in the utilization of the accumulated cytoplasmic trehalose, which was synthesized in response to high osmolarity. In Salmonella arizonae (strain ATCC BAA-731 / CDC346-86 / RSK2980), this protein is Cytoplasmic trehalase.